We begin with the raw amino-acid sequence, 780 residues long: Neutral ceramidase (780 aa).

The Cytoplasmic segment spans residues 1-12 (MAKRTFSNLETF). A helical; Signal-anchor for type II membrane protein transmembrane segment spans residues 13–33 (LIFLLVMMSAITVALLSLLFI). Residues 34 to 780 (TSGTIENHKD…TSPAFEVVTI (747 aa)) lie on the Lumenal side of the membrane. The disordered stretch occupies residues 47–90 (HFFSTTQSPPATQGSTAAQRSTATQHSTATQSSTATQTSPVPLT). The span at 57–85 (ATQGSTAAQRSTATQHSTATQSSTATQTS) shows a compositional bias: low complexity. An O-linked (GalNAc...) threonine glycan is attached at threonine 62. O-linked (GalNAc...) serine glycosylation is present at serine 67. O-linked (GalNAc...) threonine glycans are attached at residues threonine 68 and threonine 70. The O-linked (GalNAc...) serine glycan is linked to serine 73. O-linked (GalNAc...) threonine glycosylation is found at threonine 74 and threonine 76. Serine 78 and serine 79 each carry an O-linked (GalNAc...) serine glycan. 3 O-linked (GalNAc...) threonine glycosylation sites follow: threonine 80, threonine 82, and threonine 84. Asparagine 98 carries an N-linked (GlcNAc...) asparagine glycan. Residue leucine 134 coordinates Ca(2+). N-linked (GlcNAc...) asparagine glycosylation occurs at asparagine 151. A Zn(2+)-binding site is contributed by histidine 194. Asparagine 217 is a glycosylation site (N-linked (GlcNAc...) asparagine). Histidine 303 serves as a coordination point for Zn(2+). N-linked (GlcNAc...) asparagine glycosylation occurs at asparagine 308. Serine 354 functions as the Nucleophile in the catalytic mechanism. 2 cysteine pairs are disulfide-bonded: cysteine 362–cysteine 376 and cysteine 369–cysteine 384. N-linked (GlcNAc...) asparagine glycans are attached at residues asparagine 440 and asparagine 468. Residues cysteine 448 and cysteine 498 are joined by a disulfide bond. Residue glutamate 540 coordinates Zn(2+). The N-linked (GlcNAc...) asparagine glycan is linked to asparagine 564. Tyrosine 579 lines the Zn(2+) pocket. The Ca(2+) site is built by aspartate 712, serine 714, and threonine 717. Asparagine 730 carries an N-linked (GlcNAc...) asparagine glycan. Positions 770 to 780 (GTSPAFEVVTI) are required for correct folding and localization. A glycan (O-linked (GalNAc...) threonine) is linked at threonine 779.

Belongs to the neutral ceramidase family. Zn(2+) is required as a cofactor. Post-translationally, proteolytic cleavage of the N-terminus removes the signal-anchor and produces a soluble form of the protein. In terms of processing, N-glycosylated. Required for enzyme activity. O-glycosylated. Required to retain it as a type II membrane protein at the cell surface. Post-translationally, phosphorylated. May prevent ubiquitination and subsequent degradation. In terms of processing, ubiquitinated, leading to its degradation by the proteasome. Ubiquitination is triggered by nitric oxide. As to expression, primarily expressed in intestine. Ubiquitously expressed with higher levels in kidney, skeletal muscle and heart. The ubiquitous expression observed for ASAH2 might be an experimental artifact due to the paralog ASAH2B.

It localises to the cell membrane. The protein resides in the membrane raft. It is found in the membrane. The protein localises to the caveola. Its subcellular location is the golgi apparatus membrane. It localises to the mitochondrion. The protein resides in the secreted. It is found in the extracellular exosome. The catalysed reaction is an N-acylsphing-4-enine + H2O = sphing-4-enine + a fatty acid. The enzyme catalyses N-dodecanoylsphing-4-enine + H2O = dodecanoate + sphing-4-enine. It carries out the reaction N-hexadecanoylsphing-4-enine + H2O = sphing-4-enine + hexadecanoate. It catalyses the reaction N-octanoylsphing-4-enine + H2O = octanoate + sphing-4-enine. The catalysed reaction is N-(hexanoyl)sphing-4-enine + H2O = hexanoate + sphing-4-enine. The enzyme catalyses N-octadecanoylsphing-4-enine + H2O = sphing-4-enine + octadecanoate. It carries out the reaction N-tetradecanoylsphing-4-enine + H2O = tetradecanoate + sphing-4-enine. It catalyses the reaction N-(9Z-octadecenoyl)-sphing-4-enine + H2O = sphing-4-enine + (9Z)-octadecenoate. The catalysed reaction is N-(15Z-tetracosenoyl)-sphing-4-enine + H2O = (15Z)-tetracosenoate + sphing-4-enine. The enzyme catalyses sphinganine + hexadecanoate = N-hexadecanoylsphinganine + H2O. It carries out the reaction N-(octadecanoyl)-sphinganine + H2O = sphinganine + octadecanoate. It functions in the pathway lipid metabolism; sphingolipid metabolism. With respect to regulation, inhibited by dithiothreitol (DTT) and 2-mercaptoethanol. Activity is mildly stimulated by Ca(2+) and Mg(2+), but is not inhibited by EDTA. Activity is inhibited by millimolar levels of Fe(2+), Zn(2+) and Cu(2+). Inhibited by cholesterol. In terms of biological role, plasma membrane ceramidase that hydrolyzes sphingolipid ceramides into sphingosine and free fatty acids at neutral pH. Ceramides, sphingosine, and its phosphorylated form sphingosine-1-phosphate are bioactive lipids that mediate cellular signaling pathways regulating several biological processes including cell proliferation, apoptosis and differentiation. Also catalyzes the reverse reaction allowing the synthesis of ceramides from fatty acids and sphingosine. Together with sphingomyelinase, participates in the production of sphingosine and sphingosine-1-phosphate from the degradation of sphingomyelin, a sphingolipid enriched in the plasma membrane of cells. Also participates in the hydrolysis of ceramides from the extracellular milieu allowing the production of sphingosine-1-phosphate inside and outside cells. This is the case for instance with the digestion of dietary sphingolipids in the intestinal tract. The protein is Neutral ceramidase (ASAH2) of Homo sapiens (Human).